The chain runs to 271 residues: Tryptophan synthase alpha chain (271 aa).

Catalysis depends on proton acceptor residues glutamate 49 and aspartate 60.

It belongs to the TrpA family. As to quaternary structure, tetramer of two alpha and two beta chains.

The catalysed reaction is (1S,2R)-1-C-(indol-3-yl)glycerol 3-phosphate + L-serine = D-glyceraldehyde 3-phosphate + L-tryptophan + H2O. The protein operates within amino-acid biosynthesis; L-tryptophan biosynthesis; L-tryptophan from chorismate: step 5/5. The alpha subunit is responsible for the aldol cleavage of indoleglycerol phosphate to indole and glyceraldehyde 3-phosphate. The chain is Tryptophan synthase alpha chain from Aromatoleum aromaticum (strain DSM 19018 / LMG 30748 / EbN1) (Azoarcus sp. (strain EbN1)).